Here is a 474-residue protein sequence, read N- to C-terminus: Protein NAR1 (474 aa).

[4Fe-4S] cluster contacts are provided by cysteine 24, cysteine 61, cysteine 64, cysteine 67, cysteine 177, cysteine 233, cysteine 390, and cysteine 394.

This sequence belongs to the NARF family. Part of a complex composed of AE7, CIA1, MMS19 and NAR1. Interacts with CIA1. Expressed in developing tissues, including shoot apex, young leaves, vascular tissues, root tips, pedicels, carpels and developing seeds.

It is found in the nucleus. The protein localises to the cytoplasm. Essential component of the cytosolic iron-sulfur (Fe-S) protein assembly (CIA) machinery. Required for the maturation of extramitochondrial Fe/S proteins. Required for expression of the imprinted FWA gene, for seed development and is involved in the oxidative stress response in vegetative tissues. Involved in the regulation of cell size, ploidy and cell cycle progression. Required for growth under normoxic conditions and necessary for recovery after hypoxic treatment but its action is reactive oxygen species (ROS) independent. In Arabidopsis thaliana (Mouse-ear cress), this protein is Protein NAR1.